Reading from the N-terminus, the 189-residue chain is Probable nicotinate-nucleotide adenylyltransferase (189 aa).

The protein belongs to the NadD family.

The catalysed reaction is nicotinate beta-D-ribonucleotide + ATP + H(+) = deamido-NAD(+) + diphosphate. The protein operates within cofactor biosynthesis; NAD(+) biosynthesis; deamido-NAD(+) from nicotinate D-ribonucleotide: step 1/1. In terms of biological role, catalyzes the reversible adenylation of nicotinate mononucleotide (NaMN) to nicotinic acid adenine dinucleotide (NaAD). The chain is Probable nicotinate-nucleotide adenylyltransferase from Bacillus mycoides (strain KBAB4) (Bacillus weihenstephanensis).